The primary structure comprises 466 residues: uncharacterized protein (466 aa).

The Autotransporter domain maps to 178 to 466 (SQGSASSMWM…QGMLGVKYSW (289 aa)).

This is an uncharacterized protein from Escherichia coli (strain K12).